The sequence spans 257 residues: Phycoerythrobilin:ferredoxin oxidoreductase (257 aa).

It belongs to the HY2 family.

The enzyme catalyses (3Z)-phycoerythrobilin + oxidized 2[4Fe-4S]-[ferredoxin] = 15,16-dihydrobiliverdin + reduced 2[4Fe-4S]-[ferredoxin] + 2 H(+). In terms of biological role, catalyzes the two-electron reduction of the C2 and C3(1) diene system of 15,16-dihydrobiliverdin. This Prochlorococcus marinus (strain MIT 9211) protein is Phycoerythrobilin:ferredoxin oxidoreductase.